The chain runs to 433 residues: Chitinase-like protein EN03 (433 aa).

Residues 1–16 form the signal peptide; sequence MKLFIALVGLLALAKA. The region spanning 23-433 is the GH18 domain; the sequence is SKVLCYYDSR…PILRAAKYRL (411 aa). A disulfide bridge links Cys27 with Cys54. Asn220 is a glycosylation site (N-linked (GlcNAc...) asparagine). The cysteines at positions 337 and 418 are disulfide-linked.

Belongs to the glycosyl hydrolase 18 family. IDGF subfamily.

It is found in the secreted. The sequence is that of Chitinase-like protein EN03 from Bombyx mori (Silk moth).